The chain runs to 80 residues: Acyl carrier protein (80 aa).

The region spanning 3 to 78 is the Carrier domain; the sequence is DDTFSRIQSI…QVLEYIEAES (76 aa). An O-(pantetheine 4'-phosphoryl)serine modification is found at Ser38.

The protein belongs to the acyl carrier protein (ACP) family. 4'-phosphopantetheine is transferred from CoA to a specific serine of apo-ACP by AcpS. This modification is essential for activity because fatty acids are bound in thioester linkage to the sulfhydryl of the prosthetic group.

Its subcellular location is the plastid. The protein resides in the chloroplast. The protein operates within lipid metabolism; fatty acid biosynthesis. In terms of biological role, carrier of the growing fatty acid chain in fatty acid biosynthesis. The chain is Acyl carrier protein from Trieres chinensis (Marine centric diatom).